A 443-amino-acid chain; its full sequence is Protein AknT (443 aa).

This sequence belongs to the cytochrome P450 family.

Involved in the biosynthesis of the anthracycline antitumor agent aclacinomycin A. AknT is required for the glycosylation of aklavinone aglycone by AknS to yield aclacinomycin T (rhodosaminyl-aklavinone). The polypeptide is Protein AknT (Streptomyces galilaeus).